Consider the following 515-residue polypeptide: Monocarboxylate transporter 10 (515 aa).

A disordered region spans residues 1–48; that stretch reads MVLSQEEPDSARGTSEAQPLGPAPTGAAPPPGPGPSDSPEAAVEKVEV. At 1–66 the chain is on the cytoplasmic side; the sequence is MVLSQEEPDS…EPHEPPEPPE (66 aa). The segment covering 17-26 has biased composition (low complexity); that stretch reads AQPLGPAPTG. Residues 27–36 show a composition bias toward pro residues; sequence AAPPPGPGPS. A helical transmembrane segment spans residues 67-87; that stretch reads GGWGWLVMLAAMWCNGSVFGI. At 88 to 114 the chain is on the extracellular side; the sequence is QNACGVLFVSMLETFGSKDDDKMVFKT. A helical transmembrane segment spans residues 115–135; the sequence is AWVGSLSMGMIFFCCPIVSVF. The Cytoplasmic portion of the chain corresponds to 136–144; that stretch reads TDLFGCRKT. A helical membrane pass occupies residues 145–165; that stretch reads AVVGAAVGFVGLMSSSFVSSI. Topologically, residues 166 to 171 are extracellular; the sequence is EPLYLT. A helical membrane pass occupies residues 172-192; the sequence is YGIIFACGCSFAYQPSLVILG. Residues 193 to 200 lie on the Cytoplasmic side of the membrane; that stretch reads HYFKKRLG. Residues 201-221 traverse the membrane as a helical segment; it reads LVNGIVTAGSSVFTILLPLLL. Topologically, residues 222 to 228 are extracellular; that stretch reads RVLIDSV. The chain crosses the membrane as a helical span at residues 229-249; the sequence is GLFYTLRVLCIFMFVLFLAGF. The Cytoplasmic segment spans residues 250 to 291; sequence TYRPLATSTKDKESGGSGSSLFSRKKFSPPKKIFNFAIFKVT. Ser-263 is modified (phosphoserine). Residues 292–312 form a helical membrane-spanning segment; it reads AYAVWAVGIPLALFGYFVPYV. At 313 to 329 the chain is on the extracellular side; it reads HLMKHVNERFQDEKNKE. The helical transmembrane segment at 330–350 threads the bilayer; it reads VVLMCIGVTSGVGRLLFGRIA. Residue Asp-351 is a topological domain, cytoplasmic. Residues 352-372 form a helical membrane-spanning segment; it reads YVPGVKKVYLQVLSFFFIGLM. Residues 373 to 396 lie on the Extracellular side of the membrane; it reads SMMIPLCSIFGALIAVCLIMGLFD. Residues 397–417 traverse the membrane as a helical segment; sequence GCFISIMAPIAFELVGAQDVS. Residues 418–419 lie on the Cytoplasmic side of the membrane; sequence QA. A helical membrane pass occupies residues 420-440; it reads IGFLLGFMSIPMTVGPPIAGL. The Extracellular portion of the chain corresponds to 441–451; the sequence is LRDKLGSYDVA. A helical membrane pass occupies residues 452-472; that stretch reads FYLAGVPPLIGGAVLCFIPWI. At 473–515 the chain is on the cytoplasmic side; it reads HSKKQREISKTTGKEKMEKMLENQNSLLSSSSGMFKKESDSII. Residues Ser-498, Ser-501, Ser-503, and Ser-504 each carry the phosphoserine modification.

Belongs to the major facilitator superfamily. Monocarboxylate porter (TC 2.A.1.13) family. Post-translationally, not N-glycosylated. As to expression, strongly expressed in kidney and skeletal muscle and at lower level in placenta and heart.

It is found in the cell membrane. It localises to the basolateral cell membrane. It catalyses the reaction 3,3',5-triiodo-L-thyronine(out) = 3,3',5-triiodo-L-thyronine(in). It carries out the reaction L-thyroxine(out) = L-thyroxine(in). The enzyme catalyses L-tryptophan(in) = L-tryptophan(out). The catalysed reaction is L-tyrosine(in) = L-tyrosine(out). It catalyses the reaction L-phenylalanine(in) = L-phenylalanine(out). Its function is as follows. Sodium- and proton-independent thyroid hormones and aromatic acids transporter. Mediates both uptake and efflux of 3,5,3'-triiodothyronine (T3) and 3,5,3',5'-tetraiodothyronine (T4) with high affinity, suggesting a role in the homeostasis of thyroid hormone levels. Responsible for low affinity bidirectional transport of the aromatic amino acids, such as phenylalanine, tyrosine, tryptophan and L-3,4-dihydroxyphenylalanine (L-dopa). Plays an important role in homeostasis of aromatic amino acids. This chain is Monocarboxylate transporter 10 (SLC16A10), found in Homo sapiens (Human).